A 336-amino-acid polypeptide reads, in one-letter code: MSNNQRKDTLLSVLNLSPVVQGGTIAESFRNSMDLARRAEEWGYHRYWLAEHHNIEGVASSATAVLIGHIAGGTKKIRVGSGGIMLPNHSSLVIAEQFGTLETLYPGRIDLGLGRAPGTDQLTARALRRNINSGEDFPEQLEELRNYFKPSGNVRNQVRAIPGEGIDVPIWLLGSSGFSARLAGELGLPFAFAAHFSPANTVPALELYRNSFTPSDVLDEPYAMVGVTIIAADTNEKAQHLATSHYQRFLDLVRGTPNQLKPPVEDMDQIWSPYEKAMVNEQLSSTIVGGPEEVKAKLEDFVKTTQADEIMVNSETFEHADRMRSFEIIADVWKNR.

This sequence to bacterial alkanal monooxygenase alpha and beta chains.

This is an uncharacterized protein from Bacillus subtilis (strain 168).